Consider the following 55-residue polypeptide: Large ribosomal subunit protein bL32 (55 aa).

Residues 1-19 (MAVPKRRMSRANTHTRRSQ) are compositionally biased toward basic residues. Positions 1-21 (MAVPKRRMSRANTHTRRSQWK) are disordered.

Belongs to the bacterial ribosomal protein bL32 family.

The polypeptide is Large ribosomal subunit protein bL32 (Corynebacterium kroppenstedtii (strain DSM 44385 / JCM 11950 / CIP 105744 / CCUG 35717)).